The following is a 468-amino-acid chain: ATP synthase subunit beta (468 aa).

155 to 162 is a binding site for ATP; the sequence is GGAGVGKT.

It belongs to the ATPase alpha/beta chains family. In terms of assembly, F-type ATPases have 2 components, CF(1) - the catalytic core - and CF(0) - the membrane proton channel. CF(1) has five subunits: alpha(3), beta(3), gamma(1), delta(1), epsilon(1). CF(0) has three main subunits: a(1), b(2) and c(9-12). The alpha and beta chains form an alternating ring which encloses part of the gamma chain. CF(1) is attached to CF(0) by a central stalk formed by the gamma and epsilon chains, while a peripheral stalk is formed by the delta and b chains.

The protein localises to the cell membrane. It carries out the reaction ATP + H2O + 4 H(+)(in) = ADP + phosphate + 5 H(+)(out). Its function is as follows. Produces ATP from ADP in the presence of a proton gradient across the membrane. The catalytic sites are hosted primarily by the beta subunits. This is ATP synthase subunit beta from Streptococcus pyogenes serotype M49 (strain NZ131).